A 377-amino-acid polypeptide reads, in one-letter code: Histone deacetylase 8 (377 aa).

The tract at residues Leu14–Gly324 is histone deacetylase. The residue at position 39 (Ser39) is a Phosphoserine. Asp101 contacts substrate. Catalysis depends on His143, which acts as the Proton acceptor. Gly151 contributes to the substrate binding site. Positions 178, 180, and 267 each coordinate a divalent metal cation. Tyr306 is a substrate binding site.

This sequence belongs to the histone deacetylase family. HD type 1 subfamily. In terms of assembly, interacts with CBFA2T3. Interacts with phosphorylated SMG5/EST1B; this interaction protects SMG5 from ubiquitin-mediated degradation. Associates with alpha-SMA (smooth muscle alpha-actin). A divalent metal cation is required as a cofactor. Phosphorylated by PKA on serine 39. Phosphorylation reduces deacetylase activity observed preferentially on histones H3 and H4.

The protein resides in the nucleus. It is found in the chromosome. It localises to the cytoplasm. The enzyme catalyses N(6)-acetyl-L-lysyl-[histone] + H2O = L-lysyl-[histone] + acetate. The catalysed reaction is N(6)-acetyl-L-lysyl-[protein] + H2O = L-lysyl-[protein] + acetate. It catalyses the reaction N(6)-(2E)-butenoyl-L-lysyl-[protein] + H2O = (2E)-2-butenoate + L-lysyl-[protein]. Its activity is inhibited by trichostatin A (TSA) and butyrate, 2 well known histone deacetylase inhibitors. histone deacetylase inhibitor. In terms of biological role, histone deacetylase that catalyzes the deacetylation of lysine residues on the N-terminal part of the core histones (H2A, H2B, H3 and H4). Histone deacetylation gives a tag for epigenetic repression and plays an important role in transcriptional regulation, cell cycle progression and developmental events. Histone deacetylases act via the formation of large multiprotein complexes. Also involved in the deacetylation of cohesin complex protein SMC3 regulating release of cohesin complexes from chromatin. May play a role in smooth muscle cell contractility. In addition to protein deacetylase activity, also has protein-lysine deacylase activity: acts as a protein decrotonylase by mediating decrotonylation ((2E)-butenoyl) of histones. In Mus musculus (Mouse), this protein is Histone deacetylase 8 (Hdac8).